Reading from the N-terminus, the 436-residue chain is Ribulose bisphosphate carboxylase large chain (436 aa).

Substrate is bound by residues Asn104 and Thr154. Lys156 acts as the Proton acceptor in catalysis. Position 158 (Lys158) interacts with substrate. Mg(2+)-binding residues include Lys182, Asp184, and Glu185. Position 182 is an N6-carboxylysine (Lys182). The Proton acceptor role is filled by His275. Substrate-binding residues include Arg276, His308, and Ser360.

The protein belongs to the RuBisCO large chain family. Type I subfamily. Heterohexadecamer of 8 large chains and 8 small chains. Mg(2+) serves as cofactor.

Its subcellular location is the plastid. It is found in the chloroplast. It catalyses the reaction 2 (2R)-3-phosphoglycerate + 2 H(+) = D-ribulose 1,5-bisphosphate + CO2 + H2O. The catalysed reaction is D-ribulose 1,5-bisphosphate + O2 = 2-phosphoglycolate + (2R)-3-phosphoglycerate + 2 H(+). Its function is as follows. RuBisCO catalyzes two reactions: the carboxylation of D-ribulose 1,5-bisphosphate, the primary event in carbon dioxide fixation, as well as the oxidative fragmentation of the pentose substrate in the photorespiration process. Both reactions occur simultaneously and in competition at the same active site. The protein is Ribulose bisphosphate carboxylase large chain of Euglena myxocylindracea.